Reading from the N-terminus, the 314-residue chain is Probable cell division protein WhiA (314 aa).

Positions 274–308 (SLKELGEMVSTGPISKSGMNHRLRKLNELADKIRN) form a DNA-binding region, H-T-H motif.

Belongs to the WhiA family.

Functionally, involved in cell division and chromosome segregation. This Staphylococcus epidermidis (strain ATCC 35984 / DSM 28319 / BCRC 17069 / CCUG 31568 / BM 3577 / RP62A) protein is Probable cell division protein WhiA.